The sequence spans 285 residues: Complex I assembly factor TIMMDC1, mitochondrial (285 aa).

4 helical membrane passes run 80–100 (AAVS…FIYA), 137–159 (RWSW…LTVY), 165–185 (MSHF…NLGV), and 188–208 (LVAG…LLMA). The segment at 265 to 285 (RIEELLSLPRNPSSPHQQSKH) is disordered. Polar residues predominate over residues 274–285 (RNPSSPHQQSKH). The residue at position 277 (S277) is a Phosphoserine.

It belongs to the Tim17/Tim22/Tim23 family. In terms of assembly, associates with the intermediate 315 kDa subcomplex of incompletely assembled complex I. Interacts with TMEM70.

The protein localises to the mitochondrion membrane. Functionally, chaperone protein involved in the assembly of the mitochondrial NADH:ubiquinone oxidoreductase complex (complex I). Participates in constructing the membrane arm of complex I. This is Complex I assembly factor TIMMDC1, mitochondrial from Mus musculus (Mouse).